Here is a 299-residue protein sequence, read N- to C-terminus: Sugar transporter SWEET1 (299 aa).

Residues 7–91 (QVLSISAITT…CVFFLIYSLP (85 aa)) enclose the MtN3/slv 1 domain. 7 helical membrane-spanning segments follow: residues 8-28 (VLSI…IPIC), 36-56 (AVGD…SFWL), 67-87 (MIIV…FFLI), 95-115 (FTCQ…WIAL), 124-144 (VICM…LGVV), 155-175 (LPMC…GNLV), and 180-200 (IIIP…LFVV). In terms of domain architecture, MtN3/slv 2 spans 121–205 (YLGVICMTFN…ALFVVLPIRE (85 aa)). A disordered region spans residues 230–299 (RGDCIVSSPP…DPDLSSIQSP (70 aa)). Residues 247–261 (NETRSDVEDKFDKLM) are compositionally biased toward basic and acidic residues. The segment covering 276–299 (SMGSPPSYKSRSSSDPDLSSIQSP) has biased composition (low complexity).

Belongs to the SWEET sugar transporter family.

The protein localises to the golgi apparatus membrane. Its subcellular location is the cell membrane. Functionally, mediates both low-affinity uptake and efflux of sugar across the membrane. In Caenorhabditis elegans, this protein is Sugar transporter SWEET1 (swt-1).